Consider the following 550-residue polypeptide: MYCVQCEQTMRTPVGNGCAYAQGMCGKTAETSDLQDLLVAVLEGLSAWALAARSVDIIDHDIDSFAPRAFFSTLTNVNFDSERIVGYAKEAIYLRESLKSRTLAKNAAIQVAHPKAEIQLEGNDLASLQKQAQRFALNNDKAQVGDDLHGLRMLCLYGLKGAAAYMEHAHVLGQYDDEIYAEYHRYMAWLGTDPADMNELLDNAMGIGQMNFRIMALLDKGETQAYGDPTPVSVNVRPVAGKAILISGHDLKDLQMLLEQTEGKGINVYTHGEMLPAHGYPELKKYKHLVGNYGSGWQNQQSEFAKFPGPVLMTSNCIIDPNVGNYGDRIWTRSIVGWPGVKHIKGDDFSEMIEQALSLEGFPYSEIEHLITVGFGRQTLLNAADTVIDLVSQKKLRHVFLVGGCDGSRGERSYYTDLARAIPQDCLIMTLACGKYRFNKLDFGTLEGLPRLLDVGQCNDAYSAIMLAVNLAEKLGCGVNDLPLSLILSWFEQKAIVILLTLLSLGVKNIYTGPTAPAFLTDNLLAILNEKFGMRAITTPEQDLQEILSA.

[2Fe-2S] cluster contacts are provided by Cys-3, Cys-6, Cys-18, and Cys-25. Hybrid [4Fe-2O-2S] cluster contacts are provided by His-249, Glu-273, Cys-317, Cys-405, Cys-433, Cys-458, Glu-492, and Lys-494. Cysteine persulfide is present on Cys-405.

The protein belongs to the HCP family. It depends on [2Fe-2S] cluster as a cofactor. Requires hybrid [4Fe-2O-2S] cluster as cofactor.

It is found in the cytoplasm. The enzyme catalyses A + NH4(+) + H2O = hydroxylamine + AH2 + H(+). Functionally, catalyzes the reduction of hydroxylamine to form NH(3) and H(2)O. The sequence is that of Hydroxylamine reductase from Proteus mirabilis (strain HI4320).